The chain runs to 276 residues: NH(3)-dependent NAD(+) synthetase (276 aa).

An ATP-binding site is contributed by 51 to 58; sequence GISGGVDS. Asp57 contacts Mg(2+). Residue Arg148 participates in deamido-NAD(+) binding. Residue Thr168 coordinates ATP. Glu173 contacts Mg(2+). Deamido-NAD(+) is bound by residues Lys181 and Asp188. The ATP site is built by Lys197 and Thr219. Residue 268–269 coordinates deamido-NAD(+); the sequence is HK.

The protein belongs to the NAD synthetase family. Homodimer.

The catalysed reaction is deamido-NAD(+) + NH4(+) + ATP = AMP + diphosphate + NAD(+) + H(+). It functions in the pathway cofactor biosynthesis; NAD(+) biosynthesis; NAD(+) from deamido-NAD(+) (ammonia route): step 1/1. Catalyzes the ATP-dependent amidation of deamido-NAD to form NAD. Uses ammonia as a nitrogen source. This Streptomyces coelicolor (strain ATCC BAA-471 / A3(2) / M145) protein is NH(3)-dependent NAD(+) synthetase.